A 455-amino-acid chain; its full sequence is Bifunctional protein GlmU (455 aa).

Residues 1-225 (MEVVILAAGQ…IWETLGVNSK (225 aa)) form a pyrophosphorylase region. Residues 6-9 (LAAG), Lys20, Gln71, 76-77 (GT), 98-100 (YGD), Gly135, Glu150, Asn165, and Asn223 contribute to the UDP-N-acetyl-alpha-D-glucosamine site. A Mg(2+)-binding site is contributed by Asp100. A Mg(2+)-binding site is contributed by Asn223. Residues 226 to 246 (AQLAELERLHQRNIATRLMED) are linker. An N-acetyltransferase region spans residues 247-455 (GVTLFDPSRI…KRPVKKKAGE (209 aa)). Residues Arg329 and Lys347 each coordinate UDP-N-acetyl-alpha-D-glucosamine. His359 serves as the catalytic Proton acceptor. UDP-N-acetyl-alpha-D-glucosamine contacts are provided by Tyr362 and Asn373. Acetyl-CoA is bound by residues Ala376, 382–383 (NY), Ser401, Ala419, and Arg436.

This sequence in the N-terminal section; belongs to the N-acetylglucosamine-1-phosphate uridyltransferase family. In the C-terminal section; belongs to the transferase hexapeptide repeat family. As to quaternary structure, homotrimer. It depends on Mg(2+) as a cofactor.

It localises to the cytoplasm. The catalysed reaction is alpha-D-glucosamine 1-phosphate + acetyl-CoA = N-acetyl-alpha-D-glucosamine 1-phosphate + CoA + H(+). It catalyses the reaction N-acetyl-alpha-D-glucosamine 1-phosphate + UTP + H(+) = UDP-N-acetyl-alpha-D-glucosamine + diphosphate. It participates in nucleotide-sugar biosynthesis; UDP-N-acetyl-alpha-D-glucosamine biosynthesis; N-acetyl-alpha-D-glucosamine 1-phosphate from alpha-D-glucosamine 6-phosphate (route II): step 2/2. The protein operates within nucleotide-sugar biosynthesis; UDP-N-acetyl-alpha-D-glucosamine biosynthesis; UDP-N-acetyl-alpha-D-glucosamine from N-acetyl-alpha-D-glucosamine 1-phosphate: step 1/1. Its pathway is bacterial outer membrane biogenesis; LPS lipid A biosynthesis. In terms of biological role, catalyzes the last two sequential reactions in the de novo biosynthetic pathway for UDP-N-acetylglucosamine (UDP-GlcNAc). The C-terminal domain catalyzes the transfer of acetyl group from acetyl coenzyme A to glucosamine-1-phosphate (GlcN-1-P) to produce N-acetylglucosamine-1-phosphate (GlcNAc-1-P), which is converted into UDP-GlcNAc by the transfer of uridine 5-monophosphate (from uridine 5-triphosphate), a reaction catalyzed by the N-terminal domain. This chain is Bifunctional protein GlmU, found in Aromatoleum aromaticum (strain DSM 19018 / LMG 30748 / EbN1) (Azoarcus sp. (strain EbN1)).